The chain runs to 415 residues: Serine--tRNA ligase (415 aa).

231-233 (TAE) lines the L-serine pocket. Residue 262-264 (RSE) participates in ATP binding. Glu285 lines the L-serine pocket. 349–352 (EISS) contributes to the ATP binding site. Residue Ser383 coordinates L-serine.

The protein belongs to the class-II aminoacyl-tRNA synthetase family. Type-1 seryl-tRNA synthetase subfamily. Homodimer. The tRNA molecule binds across the dimer.

The protein resides in the cytoplasm. It carries out the reaction tRNA(Ser) + L-serine + ATP = L-seryl-tRNA(Ser) + AMP + diphosphate + H(+). The catalysed reaction is tRNA(Sec) + L-serine + ATP = L-seryl-tRNA(Sec) + AMP + diphosphate + H(+). Its pathway is aminoacyl-tRNA biosynthesis; selenocysteinyl-tRNA(Sec) biosynthesis; L-seryl-tRNA(Sec) from L-serine and tRNA(Sec): step 1/1. In terms of biological role, catalyzes the attachment of serine to tRNA(Ser). Is also able to aminoacylate tRNA(Sec) with serine, to form the misacylated tRNA L-seryl-tRNA(Sec), which will be further converted into selenocysteinyl-tRNA(Sec). This is Serine--tRNA ligase from Helicobacter pylori (strain Shi470).